The primary structure comprises 569 residues: Proline--tRNA ligase (569 aa).

It belongs to the class-II aminoacyl-tRNA synthetase family. ProS type 1 subfamily. In terms of assembly, homodimer.

The protein localises to the cytoplasm. It catalyses the reaction tRNA(Pro) + L-proline + ATP = L-prolyl-tRNA(Pro) + AMP + diphosphate. In terms of biological role, catalyzes the attachment of proline to tRNA(Pro) in a two-step reaction: proline is first activated by ATP to form Pro-AMP and then transferred to the acceptor end of tRNA(Pro). As ProRS can inadvertently accommodate and process non-cognate amino acids such as alanine and cysteine, to avoid such errors it has two additional distinct editing activities against alanine. One activity is designated as 'pretransfer' editing and involves the tRNA(Pro)-independent hydrolysis of activated Ala-AMP. The other activity is designated 'posttransfer' editing and involves deacylation of mischarged Ala-tRNA(Pro). The misacylated Cys-tRNA(Pro) is not edited by ProRS. The chain is Proline--tRNA ligase from Lactiplantibacillus plantarum (strain ATCC BAA-793 / NCIMB 8826 / WCFS1) (Lactobacillus plantarum).